Here is a 605-residue protein sequence, read N- to C-terminus: Aspartate--tRNA(Asp/Asn) ligase (605 aa).

Glu-178 is an L-aspartate binding site. Residues 202-205 (QLFK) are aspartate. Arg-224 contacts L-aspartate. ATP is bound by residues 224 to 226 (RDE) and Gln-233. His-458 provides a ligand contact to L-aspartate. Position 488 (Glu-488) interacts with ATP. An L-aspartate-binding site is contributed by Arg-495. 540–543 (GLDR) serves as a coordination point for ATP. Positions 580–605 (QQLKELHVTPAKPAKTTAKTKPRPAD) are disordered.

This sequence belongs to the class-II aminoacyl-tRNA synthetase family. Type 1 subfamily. As to quaternary structure, homodimer.

The protein resides in the cytoplasm. It catalyses the reaction tRNA(Asx) + L-aspartate + ATP = L-aspartyl-tRNA(Asx) + AMP + diphosphate. Functionally, aspartyl-tRNA synthetase with relaxed tRNA specificity since it is able to aspartylate not only its cognate tRNA(Asp) but also tRNA(Asn). Reaction proceeds in two steps: L-aspartate is first activated by ATP to form Asp-AMP and then transferred to the acceptor end of tRNA(Asp/Asn). This Thermosynechococcus vestitus (strain NIES-2133 / IAM M-273 / BP-1) protein is Aspartate--tRNA(Asp/Asn) ligase.